We begin with the raw amino-acid sequence, 258 residues long: MMDWNNKNVVYVGGFSGFGYQVCQMMMKKPMKHLIVCSRMENVEMLKKLQAINTSVKVMFVQMNIADYASIVKGVKQVIGHVGHVDVLINGVGGLADKDVETTVAVNLTGLINTTLMFMPYMDKTQSGHGGMVVSISSVYGLEPGPAFSVYSAAKHGGIGFTRSMADEHLYHKTGVAFMCICPAMTSTELMMNKRDMNWMKWVPHSEEMWKMVMDAKMQTPEECAVNMMTAMEQAKNGAIYICSTSGMKEITPTVYMH.

10–34 (VYVGGFSGFGYQVCQMMMKKPMKHL) contributes to the NAD(+) binding site. Ser138 serves as a coordination point for substrate. Tyr151 (proton acceptor) is an active-site residue.

It belongs to the short-chain dehydrogenases/reductases (SDR) family.

The chain is Development-specific 25 kDa protein from Sarcophaga peregrina (Flesh fly).